Here is a 68-residue protein sequence, read N- to C-terminus: DNA-directed RNA polymerase subunit omega (68 aa).

The protein belongs to the RNA polymerase subunit omega family. In terms of assembly, the RNAP catalytic core consists of 2 alpha, 1 beta, 1 beta' and 1 omega subunit. When a sigma factor is associated with the core the holoenzyme is formed, which can initiate transcription.

The catalysed reaction is RNA(n) + a ribonucleoside 5'-triphosphate = RNA(n+1) + diphosphate. Functionally, promotes RNA polymerase assembly. Latches the N- and C-terminal regions of the beta' subunit thereby facilitating its interaction with the beta and alpha subunits. This is DNA-directed RNA polymerase subunit omega from Ruminiclostridium cellulolyticum (strain ATCC 35319 / DSM 5812 / JCM 6584 / H10) (Clostridium cellulolyticum).